The following is an 86-amino-acid chain: RNA-binding protein Hfq (86 aa).

The region spanning 9–68 (DPYLNTLRKEKVGVSIYLVNGIKLQGTIESFDQFVILLKNTVSQMVYKHAISTVVPVRPI) is the Sm domain.

Belongs to the Hfq family. Homohexamer.

RNA chaperone that binds small regulatory RNA (sRNAs) and mRNAs to facilitate mRNA translational regulation in response to envelope stress, environmental stress and changes in metabolite concentrations. Also binds with high specificity to tRNAs. This chain is RNA-binding protein Hfq, found in Pseudomonas savastanoi pv. phaseolicola (strain 1448A / Race 6) (Pseudomonas syringae pv. phaseolicola (strain 1448A / Race 6)).